Here is a 136-residue protein sequence, read N- to C-terminus: Gonadotropin subunit beta-2 (136 aa).

The signal sequence occupies residues 1–21 (MVCLFLGASSFIWSLAPAAAA). Intrachain disulfides connect cysteine 27–cysteine 75, cysteine 41–cysteine 90, cysteine 44–cysteine 128, cysteine 52–cysteine 106, cysteine 56–cysteine 108, and cysteine 111–cysteine 118. The N-linked (GlcNAc...) asparagine glycan is linked to asparagine 31.

It belongs to the glycoprotein hormones subunit beta family. Heterodimer of an alpha and a beta chain.

The protein resides in the secreted. Involved in gametogenesis and steroidogenesis. In Fundulus heteroclitus (Killifish), this protein is Gonadotropin subunit beta-2 (cgbb).